We begin with the raw amino-acid sequence, 1250 residues long: Protein suppressor of variegation 3-7 (1250 aa).

Disordered stretches follow at residues 107–148 (LNNP…HSYH) and 160–186 (HDPGDSQDDDDEDDESSNGGGVDGGMR). Polar residues predominate over residues 132–141 (STKTEPSSDA). Residues 164–175 (DSQDDDDEDDES) show a composition bias toward acidic residues. 3 positions are modified to phosphoserine: serine 165, serine 175, and serine 176. 4 C2H2-type zinc fingers span residues 217 to 236 (CLYCNISINVNNRSRHIQQH), 319 to 343 (CRICSVRMNVEFVYLRKRHETTKGH), 425 to 446 (CTLCNCTMAITSFLRHCKTRAH), and 487 to 512 (CSVCRKRFMYGNSEIKRKNHEKSEKH). Residues 343 to 354 (HMEALRNLDSDK) show a composition bias toward basic and acidic residues. The interval 343–398 (HMEALRNLDSDKRSRKRKRSKSNSVTNSGGDEAEREKESEPEVGPEDAQDTPVVMM) is disordered. Residues 525–564 (VGSADGRGGDNMDEEEAAASDQAQSSQTDDSEDNDDDNWS) are disordered. Residues 543-552 (ASDQAQSSQT) show a composition bias toward low complexity. A compositionally biased stretch (acidic residues) spans 553–563 (DDSEDNDDDNW). The C2H2-type 5 zinc-finger motif lies at 605-629 (QICKFCRVRFHNEAAKARHELSARH). The segment at 642–684 (KLHQGTNTQTKHNAQDDEESQEQDEEYGEEEEDAEEDSQSNFD) is disordered. Over residues 657 to 679 (DDEESQEQDEEYGEEEEDAEEDS) the composition is skewed to acidic residues. 2 consecutive C2H2-type zinc fingers follow at residues 737 to 761 (CKLCEVSLYLPSSKWASKHQRTSRH) and 829 to 852 (CRVCDSRLPIKVFYLRQHDASRKH). The span at 851-860 (KHVENKERQR) shows a compositional bias: basic and acidic residues. Residues 851–915 (KHVENKERQR…PLAKRSRRSM (65 aa)) form a disordered region. Phosphoserine is present on residues serine 871 and serine 873. Residues 879–897 (DAERQESGMDKESENDMSV) are compositionally biased toward basic and acidic residues. Serine 975 carries the post-translational modification Phosphoserine. Residues 987–1026 (RHVMDLFFDSISPTMKSLPPDLAAEGKSKIMQLVCSLELR) enclose the BESS domain. The span at 1032 to 1055 (ATTPTPATVSASSKWPSSTTVTPV) shows a compositional bias: low complexity. 4 disordered regions span residues 1032 to 1060 (ATTPTPATVSASSKWPSSTTVTPVKTPPA), 1079 to 1116 (TTPHEYNNGQNNNNDKETVPKEPVTGASSAQVTINGSA), 1154 to 1180 (QSRTNVNGRLSQGGTSEAPSTPQADLS), and 1205 to 1236 (NTPQMQQPQQAQASITSSTPIMRGGPSSNGCQ). 2 stretches are compositionally biased toward polar residues: residues 1079–1091 (TTPHEYNNGQNNN) and 1104–1114 (GASSAQVTING). Residues 1206-1224 (TPQMQQPQQAQASITSSTP) show a composition bias toward low complexity.

Interacts with Su(var)39 through the BESS domain.

The protein resides in the nucleus. Its function is as follows. Dose-limiting factor in position-effect variegation, the inactivation in some cells of a gene translocated next to heterochromatin. It could play a role in chromosome condensation. The sequence is that of Protein suppressor of variegation 3-7 (Su(var)3-7) from Drosophila melanogaster (Fruit fly).